The following is a 99-amino-acid chain: ATP-dependent Clp protease adapter protein ClpS (99 aa).

It belongs to the ClpS family. As to quaternary structure, binds to the N-terminal domain of the chaperone ClpA.

Its function is as follows. Involved in the modulation of the specificity of the ClpAP-mediated ATP-dependent protein degradation. In Acetivibrio thermocellus (strain ATCC 27405 / DSM 1237 / JCM 9322 / NBRC 103400 / NCIMB 10682 / NRRL B-4536 / VPI 7372) (Clostridium thermocellum), this protein is ATP-dependent Clp protease adapter protein ClpS.